Here is a 218-residue protein sequence, read N- to C-terminus: Small ribosomal subunit protein uS3 (218 aa).

A KH type-2 domain is found at Leu38–Lys106.

This sequence belongs to the universal ribosomal protein uS3 family. Part of the 30S ribosomal subunit. Forms a tight complex with proteins S10 and S14.

Binds the lower part of the 30S subunit head. Binds mRNA in the 70S ribosome, positioning it for translation. In Legionella pneumophila (strain Lens), this protein is Small ribosomal subunit protein uS3.